Reading from the N-terminus, the 175-residue chain is dATP triphosphohydrolase (175 aa).

R19 contacts dATP. Positions 34, 66, 67, 70, 75, and 119 each coordinate Co(2+).

Belongs to the Caudovirales dATP triphosphohydrolase family. As to quaternary structure, homohexamer. Co(2+) serves as cofactor. Zn(2+) is required as a cofactor.

The enzyme catalyses dATP + H2O = 2'-deoxyadenosine + triphosphate + H(+). It carries out the reaction dADP + H2O = 2'-deoxyadenosine + diphosphate. The catalysed reaction is dAMP + H2O = 2'-deoxyadenosine + phosphate. In terms of biological role, catalyzes the hydrolysis of dATP, dADP and dAMP into dA. This step is essential for Z-genome synthesis (containing aminoadenine instead of adenine). Specifically removes dATP and its precursor dADP from the nucleotide pool of the host, preventing the incorporation of A into the phage genome and favoring the integration of the Z-base into the viral genome. This chain is dATP triphosphohydrolase (datZ), found in Cyanophage S-2L (Cyanobacteria phage S-2L).